Consider the following 591-residue polypeptide: V-type ATP synthase alpha chain (591 aa).

233–240 (GPFGAGKT) lines the ATP pocket.

It belongs to the ATPase alpha/beta chains family.

It catalyses the reaction ATP + H2O + 4 H(+)(in) = ADP + phosphate + 5 H(+)(out). In terms of biological role, produces ATP from ADP in the presence of a proton gradient across the membrane. The V-type alpha chain is a catalytic subunit. This is V-type ATP synthase alpha chain from Streptococcus pneumoniae serotype 19F (strain G54).